Here is a 341-residue protein sequence, read N- to C-terminus: MEREKEQFRKLFIGGLSFQTTEESLRNYYEQWGKLTDCVVMRDPASKRSRGFGFVTFSSMAEVDAAMAARPHSIDGRVVEPKRAVAREESGKPGAHVTVKKLFVGGIKEDTEEHHLRDYFAEYGKIDTIEIITDRQSGKKRGFGFVTFDDHDPVDKIVLQKYHTINGHNAEVRKALSRQEMQEVQSSRSGRGGNFGFGDSRGGGGNFGPGPGSNFRGGSDGYGSGRGFGDGYNGYGGGPGGGNFGGSPGYGGGRGGYGGGGPGYGNQGGGYGGGYDNYGGGNYGSGNYNDFGNYNQQPSNYGPMKSGNFGGSRNMGGPYGGGNYGPGGSGGSGGYGGRSRY.

RRM domains lie at 9-92 (RKLF…ESGK) and 100-179 (KKLF…LSRQ). K10 is covalently cross-linked (Glycyl lysine isopeptide (Lys-Gly) (interchain with G-Cter in SUMO2)). Position 17 is a phosphoserine (S17). Omega-N-methylarginine is present on R26. Phosphoserine is present on S73. An N6,N6-dimethyllysine; alternate modification is found at K92. A Glycyl lysine isopeptide (Lys-Gly) (interchain with G-Cter in SUMO2); alternate cross-link involves residue K92. Residues K100, K108, and K125 each participate in a glycyl lysine isopeptide (Lys-Gly) (interchain with G-Cter in SUMO2) cross-link. A Phosphothreonine modification is found at T128. S137 is modified (phosphoserine). Residue K140 forms a Glycyl lysine isopeptide (Lys-Gly) (interchain with G-Cter in SUMO2) linkage. T147 is subject to Phosphothreonine. Residues K156 and K161 each participate in a glycyl lysine isopeptide (Lys-Gly) (interchain with G-Cter in SUMO2); alternate cross-link. K156 and K161 each carry N6-acetyllysine; alternate. T164 carries the phosphothreonine modification. A Glycyl lysine isopeptide (Lys-Gly) (interchain with G-Cter in SUMO2) cross-link involves residue K174. Phosphoserine is present on residues S177 and S189. The interval 181 to 341 (MQEVQSSRSG…SGGYGGRSRY (161 aa)) is disordered. Positions 190 to 211 (GRGGNFGFGDSRGGGGNFGPGP) are enriched in gly residues. Asymmetric dimethylarginine; alternate is present on R191. R191 bears the Dimethylated arginine; alternate mark. R191 carries the omega-N-methylarginine; alternate modification. Phosphoserine is present on S200. At R201 the chain carries Asymmetric dimethylarginine; alternate. Position 201 is a dimethylated arginine; alternate (R201). Residue R201 is modified to Omega-N-methylarginine; alternate. S213 carries the post-translational modification Phosphoserine. R216 bears the Omega-N-methylarginine mark. 2 positions are modified to phosphoserine: S219 and S224. R226 carries the omega-N-methylarginine modification. Position 247 is a phosphoserine (S247). R254 carries the post-translational modification Asymmetric dimethylarginine; alternate. Residue R254 is modified to Omega-N-methylarginine; alternate. The tract at residues 296–335 (QQPSNYGPMKSGNFGGSRNMGGPYGGGNYGPGGSGGSGGY) is nuclear targeting sequence. Over residues 308–341 (NFGGSRNMGGPYGGGNYGPGGSGGSGGYGGRSRY) the composition is skewed to gly residues. Residue S312 is modified to Phosphoserine. R313 carries the omega-N-methylarginine modification. A Phosphotyrosine modification is found at Y319. Phosphoserine is present on residues S329 and S332. The residue at position 335 (Y335) is a Phosphotyrosine. At R338 the chain carries Omega-N-methylarginine.

In terms of assembly, identified in the spliceosome C complex. Identified in a IGF2BP1-dependent mRNP granule complex containing untranslated mRNAs. Interacts with IGF2BP1. Interacts with C9orf72. Interacts with DGCR8. Interacts with TARDBP. Interacts with CKAP5. Interacts with PPIA/CYPA. Interacts (via C-terminus) with FAM76B; the interaction results in retention of HNRNPA2B1 in the nucleus and inhibition of the NF-kappa-B-mediated inflammatory pathway. Interacts with NF-kappa-B inhibitors NFKBIA and NFKBIE; the interaction may be mediated by the RRM2 domain of HNRNPA2B1, and HNRNPA2B1 may interact simultaneously with FAM76B and either NFKBIA or NFKBIE to form a complex. Sumoylated in exosomes, promoting miRNAs-binding. Post-translationally, asymmetric dimethylation at Arg-254 constitutes the major methylation site. According to a report, methylation affects subcellular location and promotes nuclear localization. According to another report, methylation at Arg-254 does not influence nucleocytoplasmic shuttling.

The protein resides in the nucleus. It is found in the nucleoplasm. It localises to the cytoplasmic granule. Its subcellular location is the secreted. The protein localises to the extracellular exosome. Heterogeneous nuclear ribonucleoprotein (hnRNP) that associates with nascent pre-mRNAs, packaging them into hnRNP particles. The hnRNP particle arrangement on nascent hnRNA is non-random and sequence-dependent and serves to condense and stabilize the transcripts and minimize tangling and knotting. Packaging plays a role in various processes such as transcription, pre-mRNA processing, RNA nuclear export, subcellular location, mRNA translation and stability of mature mRNAs. Forms hnRNP particles with at least 20 other different hnRNP and heterogeneous nuclear RNA in the nucleus. Involved in transport of specific mRNAs to the cytoplasm in oligodendrocytes and neurons: acts by specifically recognizing and binding the A2RE (21 nucleotide hnRNP A2 response element) or the A2RE11 (derivative 11 nucleotide oligonucleotide) sequence motifs present on some mRNAs, and promotes their transport to the cytoplasm. Specifically binds single-stranded telomeric DNA sequences, protecting telomeric DNA repeat against endonuclease digestion. Also binds other RNA molecules, such as primary miRNA (pri-miRNAs): acts as a nuclear 'reader' of the N6-methyladenosine (m6A) mark by specifically recognizing and binding a subset of nuclear m6A-containing pri-miRNAs. Binding to m6A-containing pri-miRNAs promotes pri-miRNA processing by enhancing binding of DGCR8 to pri-miRNA transcripts. Involved in miRNA sorting into exosomes following sumoylation, possibly by binding (m6A)-containing pre-miRNAs. Acts as a regulator of efficiency of mRNA splicing, possibly by binding to m6A-containing pre-mRNAs. Plays a role in the splicing of pyruvate kinase PKM by binding repressively to sequences flanking PKM exon 9, inhibiting exon 9 inclusion and resulting in exon 10 inclusion and production of the PKM M2 isoform. This is Heterogeneous nuclear ribonucleoproteins A2/B1 (HNRNPA2B1) from Saguinus oedipus (Cotton-top tamarin).